Consider the following 103-residue polypeptide: Pyrimidine/purine nucleoside phosphorylase (103 aa).

The protein belongs to the nucleoside phosphorylase PpnP family.

The catalysed reaction is a purine D-ribonucleoside + phosphate = a purine nucleobase + alpha-D-ribose 1-phosphate. It catalyses the reaction adenosine + phosphate = alpha-D-ribose 1-phosphate + adenine. The enzyme catalyses cytidine + phosphate = cytosine + alpha-D-ribose 1-phosphate. It carries out the reaction guanosine + phosphate = alpha-D-ribose 1-phosphate + guanine. The catalysed reaction is inosine + phosphate = alpha-D-ribose 1-phosphate + hypoxanthine. It catalyses the reaction thymidine + phosphate = 2-deoxy-alpha-D-ribose 1-phosphate + thymine. The enzyme catalyses uridine + phosphate = alpha-D-ribose 1-phosphate + uracil. It carries out the reaction xanthosine + phosphate = alpha-D-ribose 1-phosphate + xanthine. Catalyzes the phosphorolysis of diverse nucleosides, yielding D-ribose 1-phosphate and the respective free bases. Can use uridine, adenosine, guanosine, cytidine, thymidine, inosine and xanthosine as substrates. Also catalyzes the reverse reactions. The chain is Pyrimidine/purine nucleoside phosphorylase from Nocardia farcinica (strain IFM 10152).